We begin with the raw amino-acid sequence, 153 residues long: 17.6 kDa class I heat shock protein (153 aa).

The region spanning 38 to 153 (ETAAIVNARI…PMVKAIDISG (116 aa)) is the sHSP domain.

Belongs to the small heat shock protein (HSP20) family. Forms oligomeric structures.

The protein localises to the cytoplasm. This chain is 17.6 kDa class I heat shock protein (HSP17.6), found in Helianthus annuus (Common sunflower).